The primary structure comprises 507 residues: Sensor protein CseC (507 aa).

The segment at 1-42 (MRGFFRQRRSVSPPGHPYDRTGPGEHAGPGARTGPGGRPRVL) is disordered. The segment covering 25-37 (EHAGPGARTGPGG) has biased composition (gly residues). Helical transmembrane passes span 60-80 (LSAA…LVVH) and 183-203 (ALVI…VLIG). Residues 204–260 (GQLSRRLREAAAAANRVASGEPDVRVRDAIGGVVRDETDDVARAVDAMADALQQRIE) form the HAMP domain. Positions 268 to 470 (DIAHELRTPV…VAVLWLPEHA (203 aa)) constitute a Histidine kinase domain. The residue at position 271 (His271) is a Phosphohistidine; by autocatalysis. The tract at residues 472–507 (TNTGSYPMLPDRSKSGASSSARDMSREASQGMSRKP) is disordered. Positions 486–507 (SGASSSARDMSREASQGMSRKP) are enriched in polar residues.

The protein localises to the cell membrane. The enzyme catalyses ATP + protein L-histidine = ADP + protein N-phospho-L-histidine.. In terms of biological role, member of the two-component regulatory system CseB/CseC involved in the stability of the cell envelope, through activation of transcription of RNA polymerase sigma-E factor. CseC functions as a membrane-associated protein kinase that phosphorylates CseB in response to changes in the cell envelope. The polypeptide is Sensor protein CseC (cseC) (Streptomyces coelicolor (strain ATCC BAA-471 / A3(2) / M145)).